The chain runs to 671 residues: Carbohydrate acetyl esterase/feruloyl esterase (671 aa).

The N-terminal stretch at 1 to 24 is a signal peptide; that stretch reads MYQSTLKTILLASALLILPASMSA. The carbohydrate acetyl esterase stretch occupies residues 1–296; the sequence is MYQSTLKTIL…YGEAVARHLG (296 aa). Active-site for acetyl esterase activity residues include S55, D271, and H274. The feruloyl esterase stretch occupies residues 297–671; that stretch reads YEPKRPYIEM…NEFIPHLFKK (375 aa).

In the N-terminal section; belongs to the carbohydrate esterase 6 family.

The catalysed reaction is feruloyl-polysaccharide + H2O = ferulate + polysaccharide.. It participates in glycan degradation; xylan degradation. In terms of biological role, involved in degradation of plant cell wall polysaccharides. Bifunctional esterase that possesses both acetyl esterase and ferulic acid esterase activities. Has deacetylase activity towards acetylated xylo-oligosaccharides smaller than xylo-heptaose, as well as from glucose-pentaacetate. Is also able to release ferulic acid from methylferulate, and from the more natural substrates wheat bran, corn fiber, and XOS(FA,Ac), a corn fiber-derived substrate enriched in O-acetyl and ferulic acid esters. This Xylanibacter ruminicola (strain ATCC 19189 / DSM 19721 / CIP 105475 / JCM 8958 / 23) (Prevotella ruminicola) protein is Carbohydrate acetyl esterase/feruloyl esterase.